Consider the following 178-residue polypeptide: 6,7-dimethyl-8-ribityllumazine synthase (178 aa).

5-amino-6-(D-ribitylamino)uracil is bound by residues Phe-23, 61–63 (SFE), and 85–87 (AVI). Residue 90–91 (QT) participates in (2S)-2-hydroxy-3-oxobutyl phosphate binding. The Proton donor role is filled by His-93. Tyr-118 contributes to the 5-amino-6-(D-ribitylamino)uracil binding site. Arg-132 lines the (2S)-2-hydroxy-3-oxobutyl phosphate pocket.

This sequence belongs to the DMRL synthase family.

The enzyme catalyses (2S)-2-hydroxy-3-oxobutyl phosphate + 5-amino-6-(D-ribitylamino)uracil = 6,7-dimethyl-8-(1-D-ribityl)lumazine + phosphate + 2 H2O + H(+). The protein operates within cofactor biosynthesis; riboflavin biosynthesis; riboflavin from 2-hydroxy-3-oxobutyl phosphate and 5-amino-6-(D-ribitylamino)uracil: step 1/2. Its function is as follows. Catalyzes the formation of 6,7-dimethyl-8-ribityllumazine by condensation of 5-amino-6-(D-ribitylamino)uracil with 3,4-dihydroxy-2-butanone 4-phosphate. This is the penultimate step in the biosynthesis of riboflavin. In Thermosynechococcus vestitus (strain NIES-2133 / IAM M-273 / BP-1), this protein is 6,7-dimethyl-8-ribityllumazine synthase.